The chain runs to 354 residues: UDP-N-acetylglucosamine--N-acetylmuramyl-(pentapeptide) pyrophosphoryl-undecaprenol N-acetylglucosamine transferase (354 aa).

UDP-N-acetyl-alpha-D-glucosamine contacts are provided by residues Thr11–Gly13, Arg164, Ser194, and Gln289.

This sequence belongs to the glycosyltransferase 28 family. MurG subfamily.

Its subcellular location is the cell membrane. The catalysed reaction is di-trans,octa-cis-undecaprenyl diphospho-N-acetyl-alpha-D-muramoyl-L-alanyl-D-glutamyl-meso-2,6-diaminopimeloyl-D-alanyl-D-alanine + UDP-N-acetyl-alpha-D-glucosamine = di-trans,octa-cis-undecaprenyl diphospho-[N-acetyl-alpha-D-glucosaminyl-(1-&gt;4)]-N-acetyl-alpha-D-muramoyl-L-alanyl-D-glutamyl-meso-2,6-diaminopimeloyl-D-alanyl-D-alanine + UDP + H(+). It functions in the pathway cell wall biogenesis; peptidoglycan biosynthesis. Its function is as follows. Cell wall formation. Catalyzes the transfer of a GlcNAc subunit on undecaprenyl-pyrophosphoryl-MurNAc-pentapeptide (lipid intermediate I) to form undecaprenyl-pyrophosphoryl-MurNAc-(pentapeptide)GlcNAc (lipid intermediate II). This Clostridium botulinum (strain 657 / Type Ba4) protein is UDP-N-acetylglucosamine--N-acetylmuramyl-(pentapeptide) pyrophosphoryl-undecaprenol N-acetylglucosamine transferase.